A 308-amino-acid polypeptide reads, in one-letter code: Porphobilinogen deaminase (308 aa).

Cys-241 carries the post-translational modification S-(dipyrrolylmethanemethyl)cysteine.

The protein belongs to the HMBS family. In terms of assembly, monomer. Dipyrromethane serves as cofactor.

The enzyme catalyses 4 porphobilinogen + H2O = hydroxymethylbilane + 4 NH4(+). The protein operates within porphyrin-containing compound metabolism; protoporphyrin-IX biosynthesis; coproporphyrinogen-III from 5-aminolevulinate: step 2/4. Tetrapolymerization of the monopyrrole PBG into the hydroxymethylbilane pre-uroporphyrinogen in several discrete steps. The sequence is that of Porphobilinogen deaminase from Exiguobacterium sibiricum (strain DSM 17290 / CCUG 55495 / CIP 109462 / JCM 13490 / 255-15).